Reading from the N-terminus, the 201-residue chain is MKIINSDLEKIAFLIEQYPDESLPEIAFCGRSNVGKSSFINSILDRKNLARTSSKPGKTRTVNFYNANNEFRLVDLPGYGYAQTSKSEKKKWAQVIETYLNNRRNLYEVFLIVDIRHKPTVQDKEMYNWIIQSGFCGFVIATKLDKIGKTMIKKNLNIIKKELNIDDDNLIYEYSSTSKTNKKAVMEQLEMILKYGSGIEE.

An EngB-type G domain is found at 22–195 (SLPEIAFCGR…MEQLEMILKY (174 aa)). GTP contacts are provided by residues 30 to 37 (GRSNVGKS), 57 to 61 (GKTRT), 75 to 78 (DLPG), 142 to 145 (TKLD), and 174 to 176 (YSS). Mg(2+) contacts are provided by Ser37 and Thr59.

This sequence belongs to the TRAFAC class TrmE-Era-EngA-EngB-Septin-like GTPase superfamily. EngB GTPase family. Requires Mg(2+) as cofactor.

Its function is as follows. Necessary for normal cell division and for the maintenance of normal septation. This Finegoldia magna (strain ATCC 29328 / DSM 20472 / WAL 2508) (Peptostreptococcus magnus) protein is Probable GTP-binding protein EngB.